An 827-amino-acid chain; its full sequence is Glycerol-3-phosphate acyltransferase (827 aa).

An HXXXXD motif motif is present at residues 325–330 (CHRSHM).

This sequence belongs to the GPAT/DAPAT family.

Its subcellular location is the cell inner membrane. The catalysed reaction is sn-glycerol 3-phosphate + an acyl-CoA = a 1-acyl-sn-glycero-3-phosphate + CoA. The protein operates within phospholipid metabolism; CDP-diacylglycerol biosynthesis; CDP-diacylglycerol from sn-glycerol 3-phosphate: step 1/3. The protein is Glycerol-3-phosphate acyltransferase of Shigella dysenteriae serotype 1 (strain Sd197).